The primary structure comprises 429 residues: Ribosomal RNA small subunit methyltransferase B (429 aa).

Residues 254–260 (CAAPGGK), aspartate 277, aspartate 303, and aspartate 322 each bind S-adenosyl-L-methionine. Cysteine 375 serves as the catalytic Nucleophile. The segment at 397–419 (ALSETGTPDQPGQQNLPGGEEGD) is disordered. Polar residues predominate over residues 400-412 (ETGTPDQPGQQNL).

Belongs to the class I-like SAM-binding methyltransferase superfamily. RsmB/NOP family.

The protein resides in the cytoplasm. It carries out the reaction cytidine(967) in 16S rRNA + S-adenosyl-L-methionine = 5-methylcytidine(967) in 16S rRNA + S-adenosyl-L-homocysteine + H(+). Functionally, specifically methylates the cytosine at position 967 (m5C967) of 16S rRNA. This Salmonella paratyphi A (strain ATCC 9150 / SARB42) protein is Ribosomal RNA small subunit methyltransferase B.